Consider the following 403-residue polypeptide: Spindle assembly abnormal protein 5 (403 aa).

2 disordered regions span residues 24 to 79 and 96 to 127; these read PRVF…AHPA and TVEGTSRHTKKAIASPSQNHRMTEENQEENWR. Residues 116–127 show a composition bias toward basic and acidic residues; it reads RMTEENQEENWR. A coiled-coil region spans residues 128–163; that stretch reads DVMKNEFEVMRKEMQEEATKKQEELNAQNLNKMQEM. Disordered regions lie at residues 174–205, 255–276, 302–325, and 355–403; these read AKPSAEESQDREKENWYEQSRHARQQKPANKI, AYSPLPPLSPPSGRYANGSSGN, RQWTSERNDNRTHDNYRPYEPDPQ, and YHVE…SRRK. Basic and acidic residues predominate over residues 177-194; that stretch reads SAEESQDREKENWYEQSR. A compositionally biased stretch (basic and acidic residues) spans 305-321; that stretch reads TSERNDNRTHDNYRPYE. Over residues 360–369 the composition is skewed to acidic residues; sequence VPEYEEEETE. The segment covering 379 to 403 has biased composition (basic and acidic residues); the sequence is YHEPMETESAAERERRIREKYSRRK.

In terms of assembly, interacts with sas-6 via its coiled coil domain.

The protein localises to the cytoplasm. It localises to the cytoskeleton. Its subcellular location is the microtubule organizing center. The protein resides in the centrosome. It is found in the centriole. In terms of biological role, required for centrosome duplication. Essential for daughter-centriole formation. Requires both maternal and partenal expression, suggesting that it regulates centriole duplication during both spermatogenesis and early embryogenesis. The protein is Spindle assembly abnormal protein 5 (sas-5) of Caenorhabditis briggsae.